A 320-amino-acid chain; its full sequence is Lipoyl synthase (320 aa).

Residues 1–29 show a composition bias toward basic and acidic residues; sequence MIGKLVRDLKIPDQRHPEKAHRPDNDQPR. Positions 1-32 are disordered; that stretch reads MIGKLVRDLKIPDQRHPEKAHRPDNDQPRKPS. [4Fe-4S] cluster contacts are provided by Cys-60, Cys-65, Cys-71, Cys-86, Cys-90, Cys-93, and Ser-300. The region spanning 71 to 289 is the Radical SAM core domain; that stretch reads CWGQGHATMM…EKAAYGKGFL (219 aa).

It belongs to the radical SAM superfamily. Lipoyl synthase family. It depends on [4Fe-4S] cluster as a cofactor.

The protein resides in the cytoplasm. The catalysed reaction is [[Fe-S] cluster scaffold protein carrying a second [4Fe-4S](2+) cluster] + N(6)-octanoyl-L-lysyl-[protein] + 2 oxidized [2Fe-2S]-[ferredoxin] + 2 S-adenosyl-L-methionine + 4 H(+) = [[Fe-S] cluster scaffold protein] + N(6)-[(R)-dihydrolipoyl]-L-lysyl-[protein] + 4 Fe(3+) + 2 hydrogen sulfide + 2 5'-deoxyadenosine + 2 L-methionine + 2 reduced [2Fe-2S]-[ferredoxin]. Its pathway is protein modification; protein lipoylation via endogenous pathway; protein N(6)-(lipoyl)lysine from octanoyl-[acyl-carrier-protein]: step 2/2. Its function is as follows. Catalyzes the radical-mediated insertion of two sulfur atoms into the C-6 and C-8 positions of the octanoyl moiety bound to the lipoyl domains of lipoate-dependent enzymes, thereby converting the octanoylated domains into lipoylated derivatives. This Cereibacter sphaeroides (strain ATCC 17025 / ATH 2.4.3) (Rhodobacter sphaeroides) protein is Lipoyl synthase.